Consider the following 96-residue polypeptide: MFIFNVLTIRCTFHVLFAICYFCDHLLQYISNSRDSKAGLKIFLVFELAVTIFNTVMLQLANRVKNGLTLAILIVSVVMFVYHQQLIVNCKKMLAL.

3 helical membrane-spanning segments follow: residues 2–22 (FIFNVLTIRCTFHVLFAICYF), 38–58 (AGLKIFLVFELAVTIFNTVML), and 68–88 (LTLAILIVSVVMFVYHQQLIV).

It is found in the membrane. This is an uncharacterized protein from Schizosaccharomyces pombe (strain 972 / ATCC 24843) (Fission yeast).